A 50-amino-acid polypeptide reads, in one-letter code: Phospholipase A2 trimorphin (50 aa).

The Ca(2+) site is built by Tyr-28, Gly-30, and Gly-32. Cys-29 and Cys-45 are joined by a disulfide. Residue His-48 is part of the active site. Ca(2+) is bound at residue Asp-49.

The cofactor is Ca(2+). Expressed by the venom gland.

Its subcellular location is the secreted. It catalyses the reaction a 1,2-diacyl-sn-glycero-3-phosphocholine + H2O = a 1-acyl-sn-glycero-3-phosphocholine + a fatty acid + H(+). With respect to regulation, inhibited by EDTA. Its function is as follows. PLA2 catalyzes the calcium-dependent hydrolysis of the 2-acyl groups in 3-sn-phosphoglycerides. The polypeptide is Phospholipase A2 trimorphin (Trimorphodon lambda (Sonoran lyre snake)).